Consider the following 295-residue polypeptide: G1/S-specific cyclin-D1 (295 aa).

Residues 28–152 (LRAMLKAEET…VLVNKLKWNL (125 aa)) form the Cyclin N-terminal domain. The disordered stretch occupies residues 264 to 295 (QQNLDPKAAEEEEEEEEVDLACTPTDVRDVNI). Lysine 270 is covalently cross-linked (Glycyl lysine isopeptide (Lys-Gly) (interchain with G-Cter in ubiquitin)). Residues 273–282 (EEEEEEEEVD) are compositionally biased toward acidic residues. At threonine 286 the chain carries Phosphothreonine.

Belongs to the cyclin family. Cyclin D subfamily. As to quaternary structure, interacts with either CDK4 or CDK6 protein kinase to form a serine/threonine kinase holoenzyme complex. The cyclin subunit imparts substrate specificity to the complex. Component of the ternary complex CCND1/CDK4/CDKN1B required for nuclear translocation and modulation of CDK4-mediated kinase activity. Interacts directly with CDKN1B. Can form similar complexes with either CDKN1A or CDKN2A. Interacts with UHRF2; the interaction ubiquitinates CCND1 and appears to occur independently of phosphorylation. Interacts with USP2. Interacts (via cyclin N-terminal domain) with INSM1 (via N-terminal region); the interaction competes with the binding of CCND1 to CDK4 during cell cycle progression and inhibits CDK4 activity. Interacts with CDK4; the interaction is prevented with the binding of CCND1 to INSM1 during cell cycle progression. Post-translationally, phosphorylation at Thr-286 by MAP kinases is required for ubiquitination and degradation by the DCX(AMBRA1) complex. It also plays an essential role for recognition by the FBXO31 component of SCF (SKP1-cullin-F-box) protein ligase complex following DNA damage. In terms of processing, ubiquitinated at Lys-270 by the DCX(AMBRA1) complex during the transition from G1 to S cell phase, leading to its degradation: ubiquitination is dependent on Thr-286 phosphorylation. The DCX(AMBRA1) complex represents the major regulator of CCND1 stability during the G1/S transition. Also ubiquitinated by the SCF(FBXO4) and Cul7-RING(FBXW8) ubiquitin-protein ligase complexes. Following DNA damage it is ubiquitinated by the SCF(FBXO31) protein ligase complex. SCF(FBXO31) ubiquitination is dependent on Thr-286 phosphorylation. Ubiquitinated also by UHRF2 apparently in a phosphorylation-independent manner. Ubiquitination leads to its degradation and G1 arrest. Deubiquitinated by USP2; leading to its stabilization.

It localises to the nucleus. It is found in the cytoplasm. The protein resides in the nucleus membrane. In terms of biological role, regulatory component of the cyclin D1-CDK4 (DC) complex that phosphorylates and inhibits members of the retinoblastoma (RB) protein family including RB1 and regulates the cell-cycle during G(1)/S transition. Phosphorylation of RB1 allows dissociation of the transcription factor E2F from the RB/E2F complex and the subsequent transcription of E2F target genes which are responsible for the progression through the G(1) phase. Hypophosphorylates RB1 in early G(1) phase. Cyclin D-CDK4 complexes are major integrators of various mitogenenic and antimitogenic signals. Also a substrate for SMAD3, phosphorylating SMAD3 in a cell-cycle-dependent manner and repressing its transcriptional activity. Component of the ternary complex, cyclin D1/CDK4/CDKN1B, required for nuclear translocation and activity of the cyclin D-CDK4 complex. Exhibits transcriptional corepressor activity with INSM1 on the NEUROD1 and INS promoters in a cell cycle-independent manner. This is G1/S-specific cyclin-D1 (CCND1) from Bos taurus (Bovine).